Consider the following 454-residue polypeptide: Protein disulfide-isomerase TMX3 (454 aa).

A signal peptide spans 1–24 (MAAWKSWAALRLCATVVLLDMVVC). Residues 25 to 128 (KGFVEDLDES…KDDIIEFAHR (104 aa)) enclose the Thioredoxin domain. Residues 25 to 375 (KGFVEDLDES…TIVSIFKSSP (351 aa)) are Lumenal-facing. Catalysis depends on nucleophile residues cysteine 53 and cysteine 56. A disulfide bridge links cysteine 53 with cysteine 56. 2 N-linked (GlcNAc...) asparagine glycosylation sites follow: asparagine 258 and asparagine 313. A helical membrane pass occupies residues 376–396 (LMGCFLFGLPLGVISIMCYGI). Residues 397–454 (YTADTDGGYIEERYEVSKSENENQEQIEESKEQQEPSSGGSVVPTVQEPKDVLEKKKD) lie on the Cytoplasmic side of the membrane. The disordered stretch occupies residues 412–454 (VSKSENENQEQIEESKEQQEPSSGGSVVPTVQEPKDVLEKKKD). A compositionally biased stretch (basic and acidic residues) spans 444–454 (EPKDVLEKKKD). The Di-lysine motif motif lies at 451 to 454 (KKKD).

This sequence belongs to the protein disulfide isomerase family.

It localises to the endoplasmic reticulum membrane. The enzyme catalyses Catalyzes the rearrangement of -S-S- bonds in proteins.. Probable disulfide isomerase, which participates in the folding of proteins containing disulfide bonds. May act as a dithiol oxidase. Acts as a regulator of endoplasmic reticulum-mitochondria contact sites via its ability to regulate redox signals. The chain is Protein disulfide-isomerase TMX3 (TMX3) from Pongo abelii (Sumatran orangutan).